The primary structure comprises 282 residues: Elongation factor Ts (282 aa).

The tract at residues 80–83 (TDFV) is involved in Mg(2+) ion dislocation from EF-Tu.

Belongs to the EF-Ts family.

It is found in the cytoplasm. In terms of biological role, associates with the EF-Tu.GDP complex and induces the exchange of GDP to GTP. It remains bound to the aminoacyl-tRNA.EF-Tu.GTP complex up to the GTP hydrolysis stage on the ribosome. The sequence is that of Elongation factor Ts from Chlamydia trachomatis serovar L2b (strain UCH-1/proctitis).